Consider the following 103-residue polypeptide: Small ribosomal subunit protein uS10 (103 aa).

It belongs to the universal ribosomal protein uS10 family. Part of the 30S ribosomal subunit.

In terms of biological role, involved in the binding of tRNA to the ribosomes. The chain is Small ribosomal subunit protein uS10 from Hahella chejuensis (strain KCTC 2396).